We begin with the raw amino-acid sequence, 214 residues long: Putative F-box protein At5g15670 (214 aa).

The F-box domain maps to 22–68 (RNKFDEIPHDLVIEILGRLPAKSVARFLTVSKLWATSIRSLDFIKSY).

This chain is Putative F-box protein At5g15670, found in Arabidopsis thaliana (Mouse-ear cress).